The primary structure comprises 80 residues: Exodeoxyribonuclease 7 small subunit (80 aa).

Belongs to the XseB family. In terms of assembly, heterooligomer composed of large and small subunits.

It localises to the cytoplasm. It catalyses the reaction Exonucleolytic cleavage in either 5'- to 3'- or 3'- to 5'-direction to yield nucleoside 5'-phosphates.. Its function is as follows. Bidirectionally degrades single-stranded DNA into large acid-insoluble oligonucleotides, which are then degraded further into small acid-soluble oligonucleotides. The protein is Exodeoxyribonuclease 7 small subunit of Aliivibrio salmonicida (strain LFI1238) (Vibrio salmonicida (strain LFI1238)).